The sequence spans 379 residues: GDGVFITESSVFETRASGRFFHRRRSRFDFRALVSPDRLVVGYFDSLSSLYLRGQPKFSSIWRGLRDAWTHKRPKPRERASGVHLQRYVRATAGRWLPLCWPPLHGIMLGDTQYFGVVRDHKTYRRFSCLRQAGRLYFIGLVSVYECVPDANTAPEIWVSGHGHAFAYLPGEDKVYVLGLSFGEFFENGLFAVYSFFERDYVDEIVEGAWFKHTFAGMYELSQILHDRANLLRVCQLHAGSKIRLGGSPACTFTFGSWNVAEADEANNFVIGVLEQAHFVVIGWMEPVNKAVFMDAHGGIHVLLYGTMLVKLAETLRGFIRQGSFWFRCPRRFCFSPLDSSATVAAKPVSSHTSPAYDVSEYVFSGRSVLDSVSGTGAS.

This sequence belongs to the herpesviridae US22 family.

This is an uncharacterized protein from Human cytomegalovirus (strain AD169) (HHV-5).